Consider the following 261-residue polypeptide: tRNA U34 carboxymethyltransferase (261 aa).

Carboxy-S-adenosyl-L-methionine is bound by residues lysine 25, tryptophan 39, lysine 44, glycine 63, 114–115, tyrosine 135, and arginine 250; that span reads VE.

The protein belongs to the class I-like SAM-binding methyltransferase superfamily. CmoB family. Homotetramer.

The enzyme catalyses carboxy-S-adenosyl-L-methionine + 5-hydroxyuridine(34) in tRNA = 5-carboxymethoxyuridine(34) in tRNA + S-adenosyl-L-homocysteine + H(+). In terms of biological role, catalyzes carboxymethyl transfer from carboxy-S-adenosyl-L-methionine (Cx-SAM) to 5-hydroxyuridine (ho5U) to form 5-carboxymethoxyuridine (cmo5U) at position 34 in tRNAs. In Helicobacter pylori (strain G27), this protein is tRNA U34 carboxymethyltransferase.